Reading from the N-terminus, the 254-residue chain is Glc operon transcriptional activator (254 aa).

The 69-residue stretch at 6-74 (RPICEVVAES…QGRDSRVARL (69 aa)) folds into the HTH gntR-type domain. A DNA-binding region (H-T-H motif) is located at residues 34 to 53 (ERRLCEKLGFSRSALREGLT).

In terms of biological role, transcriptional activator of the glcDEFGB operon which is associated with glycolate utilization, and encodes malate synthase G and the genes needed for glycolate oxidase activity. Also negatively regulates the transcription of its own gene. Glycolate acts as an effector, but GlcC can also use acetate as an alternative effector. This is Glc operon transcriptional activator (glcC) from Escherichia coli O6:H1 (strain CFT073 / ATCC 700928 / UPEC).